Here is a 382-residue protein sequence, read N- to C-terminus: Galactokinase (382 aa).

34–37 (EHTD) serves as a coordination point for substrate. 124-130 (GAGLSSS) serves as a coordination point for ATP. The Mg(2+) site is built by Ser130 and Glu162. The active-site Proton acceptor is Asp174. Tyr223 lines the substrate pocket.

This sequence belongs to the GHMP kinase family. GalK subfamily.

The protein resides in the cytoplasm. The enzyme catalyses alpha-D-galactose + ATP = alpha-D-galactose 1-phosphate + ADP + H(+). It participates in carbohydrate metabolism; galactose metabolism. Its function is as follows. Catalyzes the transfer of the gamma-phosphate of ATP to D-galactose to form alpha-D-galactose-1-phosphate (Gal-1-P). The polypeptide is Galactokinase (Salmonella heidelberg (strain SL476)).